The sequence spans 619 residues: Replication restart protein PriA (619 aa).

One can recognise a Helicase ATP-binding domain in the interval 119 to 285 (LKELQKHSAS…KDKALVRLKG (167 aa)). 132–139 (GDTGSGKT) serves as a coordination point for ATP. Positions 228-231 (DEEH) match the DEAH box motif. Zn(2+) contacts are provided by Cys336, Cys339, Cys345, Cys348, Cys363, Cys366, Cys376, and Cys379. The 162-residue stretch at 371–532 (PIPKICSACQ…ELYPPFSRLC (162 aa)) folds into the Helicase C-terminal domain.

It belongs to the helicase family. PriA subfamily. Component of the replication restart primosome. The cofactor is Zn(2+).

The enzyme catalyses Couples ATP hydrolysis with the unwinding of duplex DNA by translocating in the 3'-5' direction.. It catalyses the reaction ATP + H2O = ADP + phosphate + H(+). Its function is as follows. Initiates the restart of stalled replication forks, which reloads the replicative helicase on sites other than the origin of replication. Recognizes and binds to abandoned replication forks and remodels them to uncover a helicase loading site. Promotes assembly of the primosome at these replication forks. Functionally, important for survival of the bacteria in host cells. The polypeptide is Replication restart protein PriA (Helicobacter pylori (strain ATCC 700392 / 26695) (Campylobacter pylori)).